The primary structure comprises 421 residues: Testin (421 aa).

In terms of domain architecture, PET spans 92–199 (MILTNPVAAK…GDVKLPQEMD (108 aa)). LIM zinc-binding domains follow at residues 234–297 (YSCY…CDSE), 299–359 (PRCA…NHAV), and 362–421 (QGCH…KMMS).

This sequence belongs to the prickle / espinas / testin family. As to quaternary structure, interacts via LIM domain 1 with ZYX. Interacts (via LIM domain 3) with ENAH and VASP. Interacts with ALKBH4, talin, actin, alpha-actinin, GRIP1 and PXN. Interacts (via LIM domain 2) with ACTL7A (via N-terminus). Heterodimer with ACTL7A; the heterodimer interacts with ENAH to form a heterotrimer.

It localises to the cytoplasm. It is found in the cell junction. Its subcellular location is the focal adhesion. Scaffold protein that may play a role in cell adhesion, cell spreading and in the reorganization of the actin cytoskeleton. Plays a role in the regulation of cell proliferation. May act as a tumor suppressor. In Loxodonta africana (African elephant), this protein is Testin (TES).